Here is a 201-residue protein sequence, read N- to C-terminus: Ribonuclease HII (201 aa).

The region spanning 12 to 201 is the RNase H type-2 domain; that stretch reads GIVCGIDEVG…FAPVAQYMLF (190 aa). The a divalent metal cation site is built by aspartate 18, glutamate 19, and aspartate 113.

Belongs to the RNase HII family. The cofactor is Mn(2+). Mg(2+) is required as a cofactor.

It is found in the cytoplasm. The catalysed reaction is Endonucleolytic cleavage to 5'-phosphomonoester.. Its function is as follows. Endonuclease that specifically degrades the RNA of RNA-DNA hybrids. This is Ribonuclease HII (rnhB) from Paramagnetospirillum magneticum (strain ATCC 700264 / AMB-1) (Magnetospirillum magneticum).